The primary structure comprises 236 residues: uncharacterized protein (236 aa).

The first 26 residues, 1-26 (MTNTWNRLALLIFAVLSLLVAGELQA), serve as a signal peptide directing secretion.

This sequence belongs to the periplasmic pilus chaperone family.

It is found in the periplasm. Functionally, part of the elfADCG-ycbUVF fimbrial operon, which promotes adhesion of bacteria to different abiotic surfaces. Could be required for the biogenesis of fimbriae. This is an uncharacterized protein from Escherichia coli (strain K12).